We begin with the raw amino-acid sequence, 536 residues long: Phosphoenolpyruvate carboxykinase (ATP) (536 aa).

Residues Arg-61, Tyr-195, and Lys-201 each coordinate substrate. ATP contacts are provided by residues Lys-201, His-220, and 236-244; that span reads GLSGTGKTT. Positions 201 and 220 each coordinate Mn(2+). Asp-257 serves as a coordination point for Mn(2+). Residues Glu-285, Arg-322, and Thr-447 each coordinate ATP. Arg-322 contributes to the substrate binding site.

This sequence belongs to the phosphoenolpyruvate carboxykinase (ATP) family. The cofactor is Mn(2+).

It is found in the cytoplasm. The catalysed reaction is oxaloacetate + ATP = phosphoenolpyruvate + ADP + CO2. It participates in carbohydrate biosynthesis; gluconeogenesis. Involved in the gluconeogenesis. Catalyzes the conversion of oxaloacetate (OAA) to phosphoenolpyruvate (PEP) through direct phosphoryl transfer between the nucleoside triphosphate and OAA. In Rhizobium rhizogenes (strain K84 / ATCC BAA-868) (Agrobacterium radiobacter), this protein is Phosphoenolpyruvate carboxykinase (ATP).